Consider the following 473-residue polypeptide: Cell division protein FtsP (473 aa).

The tat-type signal signal peptide spans 1-27 (MSLSRRQFIQASGLAMCLGALPFAVQA).

It belongs to the FtsP family. Post-translationally, predicted to be exported by the Tat system. The position of the signal peptide cleavage has not been experimentally proven.

The protein resides in the periplasm. In terms of biological role, cell division protein that is required for growth during stress conditions. May be involved in protecting or stabilizing the divisomal assembly under conditions of stress. The polypeptide is Cell division protein FtsP (Xenorhabdus nematophila (strain ATCC 19061 / DSM 3370 / CCUG 14189 / LMG 1036 / NCIMB 9965 / AN6)).